The sequence spans 588 residues: Adenine deaminase (588 aa).

This sequence belongs to the metallo-dependent hydrolases superfamily. Adenine deaminase family. Homodimer. The cofactor is Mn(2+).

It carries out the reaction adenine + H2O + H(+) = hypoxanthine + NH4(+). The sequence is that of Adenine deaminase from Escherichia coli O7:K1 (strain IAI39 / ExPEC).